The sequence spans 308 residues: Phosphoribosylaminoimidazole-succinocarboxamide synthase (308 aa).

Belongs to the SAICAR synthetase family.

The enzyme catalyses 5-amino-1-(5-phospho-D-ribosyl)imidazole-4-carboxylate + L-aspartate + ATP = (2S)-2-[5-amino-1-(5-phospho-beta-D-ribosyl)imidazole-4-carboxamido]succinate + ADP + phosphate + 2 H(+). Its pathway is purine metabolism; IMP biosynthesis via de novo pathway; 5-amino-1-(5-phospho-D-ribosyl)imidazole-4-carboxamide from 5-amino-1-(5-phospho-D-ribosyl)imidazole-4-carboxylate: step 1/2. The chain is Phosphoribosylaminoimidazole-succinocarboxamide synthase from Xanthomonas oryzae pv. oryzae (strain PXO99A).